Reading from the N-terminus, the 264-residue chain is 3-methyl-2-oxobutanoate hydroxymethyltransferase (264 aa).

Mg(2+) is bound by residues D45 and D84. 3-methyl-2-oxobutanoate-binding positions include 45-46, D84, and K112; that span reads DS. Residue E114 coordinates Mg(2+). E181 functions as the Proton acceptor in the catalytic mechanism.

The protein belongs to the PanB family. Homodecamer; pentamer of dimers. It depends on Mg(2+) as a cofactor.

It localises to the cytoplasm. It carries out the reaction 3-methyl-2-oxobutanoate + (6R)-5,10-methylene-5,6,7,8-tetrahydrofolate + H2O = 2-dehydropantoate + (6S)-5,6,7,8-tetrahydrofolate. It participates in cofactor biosynthesis; (R)-pantothenate biosynthesis; (R)-pantoate from 3-methyl-2-oxobutanoate: step 1/2. In terms of biological role, catalyzes the reversible reaction in which hydroxymethyl group from 5,10-methylenetetrahydrofolate is transferred onto alpha-ketoisovalerate to form ketopantoate. The polypeptide is 3-methyl-2-oxobutanoate hydroxymethyltransferase (Shewanella oneidensis (strain ATCC 700550 / JCM 31522 / CIP 106686 / LMG 19005 / NCIMB 14063 / MR-1)).